We begin with the raw amino-acid sequence, 538 residues long: Glutamyl-tRNA(Gln) amidotransferase subunit B, mitochondrial (538 aa).

The protein belongs to the GatB/GatE family. GatB subfamily. In terms of assembly, subunit of the heterotrimeric GatCAB amidotransferase (AdT) complex, composed of A, B and C subunits.

It localises to the mitochondrion. The enzyme catalyses L-glutamyl-tRNA(Gln) + L-glutamine + ATP + H2O = L-glutaminyl-tRNA(Gln) + L-glutamate + ADP + phosphate + H(+). In terms of biological role, allows the formation of correctly charged Gln-tRNA(Gln) through the transamidation of misacylated Glu-tRNA(Gln) in the mitochondria. The reaction takes place in the presence of glutamine and ATP through an activated gamma-phospho-Glu-tRNA(Gln). The sequence is that of Glutamyl-tRNA(Gln) amidotransferase subunit B, mitochondrial from Dictyostelium discoideum (Social amoeba).